A 213-amino-acid polypeptide reads, in one-letter code: LIM domain-containing protein PLIM2c (213 aa).

2 consecutive LIM zinc-binding domains span residues Asp9–Glu69 and Asp105–Glu165. The segment at Ala177–Ser213 is disordered. Positions Ser182–Glu195 are enriched in basic and acidic residues.

As to quaternary structure, interacts with F-actin. In terms of tissue distribution, exclusively expressed in pollen grains.

The protein localises to the cytoplasm. It localises to the cytoskeleton. Functionally, binds to actin filaments and promotes cross-linking into thick bundles. Has an actin-stabilizing activity. Associates predominantly with long and dynamic actin bundles in the shank of growing pollen tubes. The actin regulatory activities are inhibited by pH &gt; 6.8 and/or high [Ca(2+)]. This chain is LIM domain-containing protein PLIM2c, found in Arabidopsis thaliana (Mouse-ear cress).